Consider the following 739-residue polypeptide: Lysine decarboxylase (739 aa).

Lys367 is modified (N6-(pyridoxal phosphate)lysine). Basic and acidic residues predominate over residues 714–726; it reads ADEPGDKPSDTVK. Positions 714–739 are disordered; that stretch reads ADEPGDKPSDTVKKAPGKKPSAAKKS. Positions 728-739 are enriched in basic residues; it reads APGKKPSAAKKS.

It belongs to the Orn/Lys/Arg decarboxylase class-I family. Pyridoxal 5'-phosphate serves as cofactor.

The protein localises to the cytoplasm. It carries out the reaction L-lysine + H(+) = cadaverine + CO2. This is Lysine decarboxylase from Hafnia alvei.